Here is a 193-residue protein sequence, read N- to C-terminus: NADH-ubiquinone oxidoreductase chain 2 (193 aa).

Transmembrane regions (helical) follow at residues 18 to 38 (FYSTSFLNLLMINLMFSKLGA), 39 to 59 (IFFLNLALYLLALALFFFFLF), 83 to 103 (FFVLIFFLNLAGIPPLLGFFL), 116 to 138 (NLAFILIFLGFNMATLFFYLSTV), and 161 to 181 (LSFLYFFNFFYFFLFFAFFFL).

The protein localises to the mitochondrion inner membrane. It catalyses the reaction a ubiquinone + NADH + 5 H(+)(in) = a ubiquinol + NAD(+) + 4 H(+)(out). Functionally, core subunit of the mitochondrial membrane respiratory chain NADH dehydrogenase (Complex I) that is believed to belong to the minimal assembly required for catalysis. Complex I functions in the transfer of electrons from NADH to the respiratory chain. The immediate electron acceptor for the enzyme is believed to be ubiquinone. The polypeptide is NADH-ubiquinone oxidoreductase chain 2 (ND2) (Paramecium tetraurelia).